Consider the following 328-residue polypeptide: P2Y purinoceptor 6 (328 aa).

Residues 1–27 are Extracellular-facing; the sequence is MERDNGTIQAPGLPPTTCVYREDFKRL. A glycan (N-linked (GlcNAc...) asparagine) is linked at Asn-5. The chain crosses the membrane as a helical span at residues 28 to 48; it reads LLPPVYSVVLVVGLPLNVCVI. At 49–62 the chain is on the cytoplasmic side; that stretch reads AQICASRRTLTRSA. A helical transmembrane segment spans residues 63–83; sequence VYTLNLALADLLYACSLPLLI. Topologically, residues 84-101 are extracellular; that stretch reads YNYARGDHWPFGDLACRL. A disulfide bond links Cys-99 and Cys-177. Residues 102–122 form a helical membrane-spanning segment; it reads VRFLFYANLHGSILFLTCISF. The Cytoplasmic portion of the chain corresponds to 123–144; the sequence is QRYLGICHPLAPWHKRGGRRAA. Residues 145 to 165 form a helical membrane-spanning segment; it reads WVVCGVVWLVVTAQCLPTAVF. The Extracellular segment spans residues 166–194; sequence AATGIQRNRTVCYDLSPPILSTRYLPYGM. The N-linked (GlcNAc...) asparagine glycan is linked to Asn-173. A helical transmembrane segment spans residues 195 to 215; it reads ALTVIGFLLPFTALLACYCRM. Residues 216–236 are Cytoplasmic-facing; the sequence is ARRLCRQDGPAGPVAQERRSK. The helical transmembrane segment at 237–257 threads the bilayer; the sequence is AARMAVVVAAVFVISFLPFHI. Residues 258–280 lie on the Extracellular side of the membrane; the sequence is TKTAYLAVRSTPGVSCPVLETFA. Residues 281 to 303 traverse the membrane as a helical segment; the sequence is AAYKGTRPFASANSVLDPILFYF. Residues 304–328 lie on the Cytoplasmic side of the membrane; sequence TQQKFRRQPHDLLQKLTAKWQRQRV.

It belongs to the G-protein coupled receptor 1 family. As to expression, abundantly expressed in various tissues including lung, stomach, intestine, spleen, mesentery, heart, and, most prominently, aorta.

The protein resides in the cell membrane. Receptor for extracellular UTP &gt; ADP = 2-methylthio-ATP &gt; ADP-beta-S &gt; ATP = ATP-gamma-S. The activity of this receptor is mediated by G proteins which activate a phosphatidylinositol-calcium second messenger system. Functionally coupled to phospholipase C. The polypeptide is P2Y purinoceptor 6 (P2ry6) (Rattus norvegicus (Rat)).